The sequence spans 24 residues: Ascaphin-5 (24 aa).

Expressed by the skin glands.

The protein localises to the secreted. Functionally, antimicrobial peptide. Synthetic peptide shows higher potency against Gram-negative bacteria than against Gram-positive bacteria. Has a very week hemolytic activity. In Ascaphus truei (Coastal tailed frog), this protein is Ascaphin-5.